A 410-amino-acid polypeptide reads, in one-letter code: Protein ea47 (410 aa).

The protein is Protein ea47 (ea47) of Escherichia coli (Bacteriophage lambda).